Here is a 508-residue protein sequence, read N- to C-terminus: Probable polyol transporter 3 (508 aa).

Helical transmembrane passes span Phe21–Gly41, Gln60–Gly80, Tyr90–Pro110, Cys120–Ile140, Gly147–Ser167, Leu178–Ile198, Ile280–Val300, Leu318–Phe338, Leu348–Thr368, Ile384–Val404, Gly418–Leu438, and Gly448–Leu468.

Belongs to the major facilitator superfamily. Sugar transporter (TC 2.A.1.1) family.

The protein resides in the membrane. Functionally, plasma membrane sugar-proton symporter. In Arabidopsis thaliana (Mouse-ear cress), this protein is Probable polyol transporter 3 (PLT3).